The sequence spans 177 residues: Dihydrofolate reductase type 9 (177 aa).

A DHFR domain is found at 3 to 167 (SLNMIVAVNK…TKLIFQIWIN (165 aa)).

It belongs to the dihydrofolate reductase family. As to quaternary structure, homodimer.

The enzyme catalyses (6S)-5,6,7,8-tetrahydrofolate + NADP(+) = 7,8-dihydrofolate + NADPH + H(+). It functions in the pathway cofactor biosynthesis; tetrahydrofolate biosynthesis; 5,6,7,8-tetrahydrofolate from 7,8-dihydrofolate: step 1/1. Its function is as follows. Key enzyme in folate metabolism. Catalyzes an essential reaction for de novo glycine and purine synthesis, and for DNA precursor synthesis. The protein is Dihydrofolate reductase type 9 (dhfrIX) of Escherichia coli.